The chain runs to 92 residues: MVENVIWPAALDANRSRSDGRRVSLDLAVENPTVDEIAKAVQQVGYDAVIERDKTYPREYEGRGRVVVKDADDATKSDLLGAVAAYMQALRE.

It belongs to the SRP19 family. Part of the signal recognition particle protein translocation system, which is composed of SRP and FtsY. Archaeal SRP consists of a 7S RNA molecule of 300 nucleotides and two protein subunits: SRP54 and SRP19.

It is found in the cytoplasm. Functionally, involved in targeting and insertion of nascent membrane proteins into the cytoplasmic membrane. Binds directly to 7S RNA and mediates binding of the 54 kDa subunit of the SRP. This Haloarcula marismortui (strain ATCC 43049 / DSM 3752 / JCM 8966 / VKM B-1809) (Halobacterium marismortui) protein is Signal recognition particle 19 kDa protein.